The primary structure comprises 125 residues: Conopressin-conophysin, isoform 1 (125 aa).

The first 22 residues, 1 to 22 (MQMGRPTLLPCLLLLLVLSTQA), serve as a signal peptide directing secretion. Cysteines 23 and 28 form a disulfide. Glycine 31 is subject to Glycine amide. Residues 32-39 (GKRDVHMI) constitute a propeptide that is removed on maturation. 7 cysteine pairs are disulfide-bonded: cysteine 45/cysteine 85, cysteine 48/cysteine 59, cysteine 53/cysteine 75, cysteine 60/cysteine 65, cysteine 92/cysteine 112, cysteine 104/cysteine 124, and cysteine 113/cysteine 118.

It belongs to the vasopressin/oxytocin family. In terms of tissue distribution, expressed by the venom gland.

The protein resides in the secreted. In terms of biological role, targets vasopressin-oxytocin related receptors. The protein is Conopressin-conophysin, isoform 1 of Conus monile (Necklace cone).